Here is a 1189-residue protein sequence, read N- to C-terminus: Zinc finger CCCH domain-containing protein 6 (1189 aa).

The span at 1–12 shows a compositional bias: basic and acidic residues; sequence MTDSEHAGHDRE. The segment at 1-105 is disordered; it reads MTDSEHAGHD…HKKRTGFYRD (105 aa). Acidic residues predominate over residues 13 to 28; sequence DGELEDGEIDDAGFEE. The stretch at 27–73 forms a coiled coil; that stretch reads EEIQEKEAKENEKQKSEKAYRKSRKKHKKEREKKKSKRRKREKHKHN. Residues 29–46 show a composition bias toward basic and acidic residues; the sequence is IQEKEAKENEKQKSEKAY. Over residues 47–73 the composition is skewed to basic residues; sequence RKSRKKHKKEREKKKSKRRKREKHKHN. 3 C3H1-type zinc fingers span residues 273–299, 301–328, and 329–352; these read KGKQ…HDAE, EKRK…HNEF, and PCKF…HDDL. A coiled-coil region spans residues 353–385; the sequence is TKETKKLLDKVLNTDEELINEDERELEELRKRG. 5 disordered regions span residues 451–530, 630–659, 676–755, 947–1026, and 1051–1189; these read FYTS…GPQN, PPVV…PVPG, YQED…GNQV, LEQF…PYAP, and PRDH…SPFC. Low complexity predominate over residues 461 to 478; it reads QFQGSSPHPQHIYSSGSS. The span at 505–525 shows a compositional bias: pro residues; that stretch reads AGPPGLPVPQSPPLPPGPPEI. Over residues 639–659 the composition is skewed to low complexity; that stretch reads HGSGSDGSSTRTGHGPLPVPG. Polar residues predominate over residues 718-741; it reads KTLQKQTETLRNQQQPSTELSTPT. A compositionally biased stretch (basic and acidic residues) spans 961–973; sequence GDPRLQKNFDPRL. Low complexity-rich tracts occupy residues 1009 to 1020 and 1056 to 1069; these read SGAGTSNSGSGA and SSST…SSGE. S1158 is modified (phosphoserine). A compositionally biased stretch (basic and acidic residues) spans 1164–1179; that stretch reads DPGRETDDKSLKEVFK.

In Homo sapiens (Human), this protein is Zinc finger CCCH domain-containing protein 6 (ZC3H6).